The chain runs to 221 residues: N-(5'-phosphoribosyl)anthranilate isomerase (221 aa).

The protein belongs to the TrpF family.

It catalyses the reaction N-(5-phospho-beta-D-ribosyl)anthranilate = 1-(2-carboxyphenylamino)-1-deoxy-D-ribulose 5-phosphate. Its pathway is amino-acid biosynthesis; L-tryptophan biosynthesis; L-tryptophan from chorismate: step 3/5. In Geobacillus thermodenitrificans (strain NG80-2), this protein is N-(5'-phosphoribosyl)anthranilate isomerase.